The following is a 664-amino-acid chain: Gametogenetin-binding protein 2 (664 aa).

Disordered regions lie at residues 375 to 425 (QEKK…NTSE) and 447 to 476 (KKGLTPHSNVSDCGYSSSLEGSEPGSQEGS). Basic residues predominate over residues 376-388 (EKKRQKKNRRKNK). Over residues 452-475 (PHSNVSDCGYSSSLEGSEPGSQEG) the composition is skewed to polar residues.

The protein localises to the cytoplasm. Functionally, may be involved in spermatogenesis. The protein is Gametogenetin-binding protein 2 (ggnbp2) of Xenopus laevis (African clawed frog).